Consider the following 24-residue polypeptide: Brevinin-1Pa (24 aa).

An intrachain disulfide couples Cys-18 to Cys-24.

Expressed by the skin glands.

The protein localises to the secreted. In terms of biological role, antibacterial activity against Gram-positive bacterium S.aureus and Gram-negative bacterium E.coli. Has activity against C.albicans. The chain is Brevinin-1Pa from Lithobates pipiens (Northern leopard frog).